Reading from the N-terminus, the 146-residue chain is Large ribosomal subunit protein uL15 (146 aa).

Basic and acidic residues predominate over residues 1 to 13 (MKLHELKPAEGSR). The tract at residues 1 to 47 (MKLHELKPAEGSRKSRKRIGRGTGSGLGRNAGKGEKGQKARAGGGVR) is disordered. The span at 21 to 31 (RGTGSGLGRNA) shows a compositional bias: gly residues.

This sequence belongs to the universal ribosomal protein uL15 family. As to quaternary structure, part of the 50S ribosomal subunit.

Its function is as follows. Binds to the 23S rRNA. This Clostridium kluyveri (strain NBRC 12016) protein is Large ribosomal subunit protein uL15.